A 438-amino-acid chain; its full sequence is Xylose isomerase (438 aa).

Catalysis depends on residues His102 and Asp105. The Mg(2+) site is built by Glu233, Glu269, His272, Asp297, Asp308, Asp310, and Asp340.

This sequence belongs to the xylose isomerase family. In terms of assembly, homotetramer. Mg(2+) is required as a cofactor.

It is found in the cytoplasm. It carries out the reaction alpha-D-xylose = alpha-D-xylulofuranose. The sequence is that of Xylose isomerase from Solibacter usitatus (strain Ellin6076).